The following is a 468-amino-acid chain: uncharacterized protein (468 aa).

Coiled-coil stretches lie at residues 10-94 (NEAL…VKEL) and 147-279 (FVEL…EASI). A disordered region spans residues 324 to 369 (TPRTVDPIPEGTIIKKESSDDAMFSGLKKSKPKKSNKSNNNQADSD). Serine 342 carries the phosphoserine modification. Residues 399 to 445 (VEQLKSRIAHFKEQQDSVTKQRIEKAKQEIEKLEAKYNSKEEKTLTE) are a coiled coil.

It is found in the cytoplasm. This is an uncharacterized protein from Schizosaccharomyces pombe (strain 972 / ATCC 24843) (Fission yeast).